Here is a 361-residue protein sequence, read N- to C-terminus: Very-long-chain 3-oxoacyl-CoA reductase (361 aa).

Residues 32–52 form a helical membrane-spanning segment; sequence PALILSTVGAAFLLRYTLSIF. NADP(+)-binding residues include Val79, Asp133, Asn163, Arg198, Tyr236, Lys240, Val269, and Ser271. The active-site Proton donor is the Tyr236. Lys240 (lowers pKa of active site Tyr) is an active-site residue.

This sequence belongs to the short-chain dehydrogenases/reductases (SDR) family.

Its subcellular location is the endoplasmic reticulum membrane. The catalysed reaction is a very-long-chain (3R)-3-hydroxyacyl-CoA + NADP(+) = a very-long-chain 3-oxoacyl-CoA + NADPH + H(+). The protein operates within lipid metabolism; fatty acid biosynthesis. Its function is as follows. Component of the microsomal membrane bound fatty acid elongation system, which produces the 26-carbon very long-chain fatty acids (VLCFA) from palmitate. Catalyzes the reduction of the 3-ketoacyl-CoA intermediate that is formed in each cycle of fatty acid elongation. VLCFAs serve as precursors for ceramide and sphingolipids. The polypeptide is Very-long-chain 3-oxoacyl-CoA reductase (Cryptococcus neoformans var. neoformans serotype D (strain B-3501A) (Filobasidiella neoformans)).